Consider the following 148-residue polypeptide: Protein-export protein SecB (148 aa).

This sequence belongs to the SecB family. In terms of assembly, homotetramer, a dimer of dimers. One homotetramer interacts with 1 SecA dimer.

Its subcellular location is the cytoplasm. Its function is as follows. One of the proteins required for the normal export of preproteins out of the cell cytoplasm. It is a molecular chaperone that binds to a subset of precursor proteins, maintaining them in a translocation-competent state. It also specifically binds to its receptor SecA. In Psychrobacter arcticus (strain DSM 17307 / VKM B-2377 / 273-4), this protein is Protein-export protein SecB.